A 379-amino-acid polypeptide reads, in one-letter code: Cell cycle checkpoint control protein RAD9A (379 aa).

Tyr17 carries the phosphotyrosine modification. Residues 40–80 (FLFAPLFFQQYQAATPGQDLLRCKILMKSFLSVFRSLAMLE) form a possesses 3'-5' exonuclease activity region. Positions 255-379 (SDTDSHSQDL…VLAEDSEGEG (125 aa)) are sufficient for interaction with ABL1. Positions 257 to 271 (TDSHSQDLGSPERHQ) are enriched in basic and acidic residues. 2 disordered regions span residues 257-289 (TDSH…DFAN) and 308-379 (SRVL…EGEG). Phosphoserine occurs at positions 261, 266, 317, 330, 363, 368, and 375.

It belongs to the rad9 family. Component of the toroidal 9-1-1 (RAD9-RAD1-HUS1) complex, composed of RAD9A, RAD1 and HUS1. The 9-1-1 complex associates with LIG1, POLB, FEN1, RAD17, HDAC1, RPA1 and RPA2. The 9-1-1 complex associates with the RAD17-RFC complex. RAD9A interacts with BCL2L1, FEN1, RAD9B, ABL1, RPA1, ATAD5 and RPA2. Interacts with DNAJC7. Interacts (when phosphorylated) with TOPBP1. Post-translationally, constitutively phosphorylated on serine and threonine amino acids in absence of DNA damage. Hyperphosphorylated by PRKCD and ABL1 upon DNA damage. Its phosphorylation by PRKCD may be required for the formation of the 9-1-1 complex. Phosphorylated at Ser-330 and Ser-375 by CK2, promoting interaction with TOPBP1.

It is found in the nucleus. The catalysed reaction is Exonucleolytic cleavage in the 3'- to 5'-direction to yield nucleoside 5'-phosphates.. Functionally, component of the 9-1-1 cell-cycle checkpoint response complex that plays a major role in DNA repair. The 9-1-1 complex is recruited to DNA lesion upon damage by the RAD17-replication factor C (RFC) clamp loader complex. Acts then as a sliding clamp platform on DNA for several proteins involved in long-patch base excision repair (LP-BER). The 9-1-1 complex stimulates DNA polymerase beta (POLB) activity by increasing its affinity for the 3'-OH end of the primer-template and stabilizes POLB to those sites where LP-BER proceeds; endonuclease FEN1 cleavage activity on substrates with double, nick, or gap flaps of distinct sequences and lengths; and DNA ligase I (LIG1) on long-patch base excision repair substrates. The 9-1-1 complex is necessary for the recruitment of RHNO1 to sites of double-stranded breaks (DSB) occurring during the S phase. RAD9A possesses 3'-&gt;5' double stranded DNA exonuclease activity. This chain is Cell cycle checkpoint control protein RAD9A (RAD9A), found in Macaca fascicularis (Crab-eating macaque).